The chain runs to 287 residues: Genetic interactor of prohibitin 7, mitochondrial (287 aa).

The transit peptide at 1–24 (MVLSNVKIFRLKSHRAFRIGPMIK) directs the protein to the mitochondrion. The chain crosses the membrane as a helical span at residues 250 to 266 (SKAIISFVVFVSIYVWL).

It belongs to the GEP7 family.

The protein resides in the mitochondrion membrane. Involved in respiratory growth and required for cell survival in the absence of prohibitins or GEM1. The sequence is that of Genetic interactor of prohibitin 7, mitochondrial (GEP7) from Saccharomyces cerevisiae (strain ATCC 204508 / S288c) (Baker's yeast).